We begin with the raw amino-acid sequence, 838 residues long: Translation initiation factor IF-2 (838 aa).

Disordered regions lie at residues 30–60 (PHTA…KVEE) and 94–254 (QRSP…PTGP). Composition is skewed to basic and acidic residues over residues 33–43 (AAEEHVSDSEK) and 96–136 (SPEE…EARR). The span at 137-173 (QPAPVAEPVAAQAAAPAPAPVVEPVQEAPVATAAPAA) shows a compositional bias: low complexity. Basic and acidic residues-rich tracts occupy residues 174–214 (DARK…EKAP) and 222–231 (TTDEESDGFR). Over residues 232–245 (RGGRGKAKLKKRNA) the composition is skewed to basic residues. Positions 338–507 (ARAPVVTVMG…LLQAEVLELK (170 aa)) constitute a tr-type G domain. The interval 347 to 354 (GHVDHGKT) is G1. 347-354 (GHVDHGKT) contributes to the GTP binding site. The G2 stretch occupies residues 372-376 (GITQH). The tract at residues 393–396 (DTPG) is G3. GTP contacts are provided by residues 393-397 (DTPGH) and 447-450 (NKID). The segment at 447-450 (NKID) is G4. A G5 region spans residues 483 to 485 (SAK).

The protein belongs to the TRAFAC class translation factor GTPase superfamily. Classic translation factor GTPase family. IF-2 subfamily.

The protein localises to the cytoplasm. One of the essential components for the initiation of protein synthesis. Protects formylmethionyl-tRNA from spontaneous hydrolysis and promotes its binding to the 30S ribosomal subunits. Also involved in the hydrolysis of GTP during the formation of the 70S ribosomal complex. The protein is Translation initiation factor IF-2 of Pseudomonas fluorescens (strain ATCC BAA-477 / NRRL B-23932 / Pf-5).